A 275-amino-acid polypeptide reads, in one-letter code: Seminase (275 aa).

Residues methionine 1–alanine 19 form the signal peptide. Residue asparagine 23 is glycosylated (N-linked (GlcNAc...) asparagine). Residues valine 44–lysine 268 form the Peptidase S1 domain. A disulfide bridge links cysteine 70 with cysteine 86. Catalysis depends on charge relay system residues histidine 85 and aspartate 131. Cystine bridges form between cysteine 194–cysteine 210 and cysteine 220–cysteine 244. Serine 224 (charge relay system) is an active-site residue.

The protein belongs to the peptidase S1 family. Undergoes cleavage in the male during mating with a cleaved product detected in the ejaculatory duct and/or bulb of males by 8-10 minutes after the start of mating. Further cleavage occurs in the mated female. In terms of tissue distribution, produced in the male accessory glands and secreted into seminal fluid.

Its subcellular location is the secreted. In terms of biological role, seminal fluid protease which is required for cleavage and probably also activation of the metalloprotease Semp1. Also required for a number of female post-mating responses independent of Semp1 including egg laying and sperm usage. In Drosophila melanogaster (Fruit fly), this protein is Seminase.